The sequence spans 459 residues: MWQLASLLLLLIIWAVSSTPVPPDSVFSSSQRAHQMLRSKRANSFLEELRPSSLERECKEETCDFEEAREIFQNTENTMAFWSKYHDGDQCAVSPPEHLCDSPCCGRGTCIDGLGGFRCDCAQGWEGRFCLHEVRFSNCSTENGGCAHYCLEEEGGRRCACAPGYRLGDDHLQCEPKVRSPCGRLGNRMEKKRKNLKRDTDQVDKKEDQIDPRLVNGKQSPWGESPWQVILLDSKKKLACGAVLIHVSWVLTAAHCLDDYKKLTVRLGEYDLRRREKWEVDLDIKEFLVHPNYTRSTSDNDIALLRLAEPATFSQTIVPICLPDSGLSERELTRVGQETVVTGWGYRSEAKTNRSFILNFIKVPVAPHNECVQAMHNKISENMLCAGILGDSRDACEGDSGGPMVASFRGTWFLVGLVSWGEGCGRLHNYGVYTKVSRYLDWIHGHIRMEEAFHKNQVP.

The signal sequence occupies residues 1-18 (MWQLASLLLLLIIWAVSS). A propeptide spanning residues 19–41 (TPVPPDSVFSSSQRAHQMLRSKR) is cleaved from the precursor. The region spanning 42–87 (ANSFLEELRPSSLERECKEETCDFEEAREIFQNTENTMAFWSKYHD) is the Gla domain. A 4-carboxyglutamate mark is found at Glu47, Glu48, Glu55, Glu57, Glu60, Glu61, Glu66, Glu67, Glu70, and Glu76. A disulfide bond links Cys58 and Cys63. 4 cysteine pairs are disulfide-bonded: Cys91/Cys110, Cys100/Cys105, Cys104/Cys119, and Cys121/Cys130. EGF-like domains lie at 96–131 (PEHL…RFCL) and 135–175 (RFSN…LQCE). A (3R)-3-hydroxyaspartate modification is found at Asp112. N-linked (GlcNAc...) asparagine glycosylation is present at Asn138. 5 cysteine pairs are disulfide-bonded: Cys139–Cys150, Cys146–Cys159, Cys161–Cys174, Cys182–Cys321, and Cys240–Cys256. Residues 214-448 (LVNGKQSPWG…YLDWIHGHIR (235 aa)) form the Peptidase S1 domain. His255 acts as the Charge relay system in catalysis. Asn292 carries N-linked (GlcNAc...) asparagine glycosylation. Asp301 serves as the catalytic Charge relay system. N-linked (GlcNAc...) asparagine glycosylation is present at Asn353. Intrachain disulfides connect Cys371–Cys385 and Cys396–Cys424. The active-site Charge relay system is Ser400.

Belongs to the peptidase S1 family. As to quaternary structure, synthesized as a single chain precursor, which is cleaved into a light chain and a heavy chain held together by a disulfide bond. The enzyme is then activated by thrombin, which cleaves a tetradecapeptide from the amino end of the heavy chain; this reaction, which occurs at the surface of endothelial cells, is strongly promoted by thrombomodulin. Post-translationally, the vitamin K-dependent, enzymatic carboxylation of some Glu residues allows the modified protein to bind calcium. In terms of processing, the iron and 2-oxoglutarate dependent 3-hydroxylation of aspartate and asparagine is (R) stereospecific within EGF domains. As to expression, plasma; synthesized in the liver.

It is found in the secreted. It localises to the golgi apparatus. Its subcellular location is the endoplasmic reticulum. The catalysed reaction is Degradation of blood coagulation factors Va and VIIIa.. In terms of biological role, protein C is a vitamin K-dependent serine protease that regulates blood coagulation by inactivating factors Va and VIIIa in the presence of calcium ions and phospholipids. Exerts a protective effect on the endothelial cell barrier function. This chain is Vitamin K-dependent protein C (PROC), found in Sus scrofa (Pig).